A 282-amino-acid polypeptide reads, in one-letter code: MKIVTTVQEMQQITSELRASGKSIGFVPTMGYLHEGHATLLRKAREENEIVVLSVFVNPLQFGPNEDLDRYPRDIDRDENVAKENGVDYLFYPSVEEMYPAEQTTTVEVVKRTDVLCGQQRPGHFAGVATVLMKLFNITVPTRAYFGMKDAQQVAVIEGFVTDFNIPVTIVPVDIVREEDGLAKSSRNVYLSQDEREEALHLYRSLCIAKERIEAGERNPEIITNLVKDYIETHTKGTVDYADLYAYPSLTMVEKVEGRIILAIAVKFENVRLIDNITLTVK.

30–37 is an ATP binding site; the sequence is MGYLHEGH. His-37 (proton donor) is an active-site residue. Position 61 (Gln-61) interacts with (R)-pantoate. Position 61 (Gln-61) interacts with beta-alanine. Position 147–150 (147–150) interacts with ATP; that stretch reads GMKD. Position 153 (Gln-153) interacts with (R)-pantoate. Residues Val-176 and 184-187 contribute to the ATP site; that span reads KSSR.

This sequence belongs to the pantothenate synthetase family. As to quaternary structure, homodimer.

It localises to the cytoplasm. It catalyses the reaction (R)-pantoate + beta-alanine + ATP = (R)-pantothenate + AMP + diphosphate + H(+). It functions in the pathway cofactor biosynthesis; (R)-pantothenate biosynthesis; (R)-pantothenate from (R)-pantoate and beta-alanine: step 1/1. Functionally, catalyzes the condensation of pantoate with beta-alanine in an ATP-dependent reaction via a pantoyl-adenylate intermediate. The sequence is that of Pantothenate synthetase from Bacillus cereus (strain B4264).